The sequence spans 266 residues: Glucosamine-6-phosphate deaminase (266 aa).

Asp72 functions as the Proton acceptor; for enolization step in the catalytic mechanism. Asp141 functions as the For ring-opening step in the catalytic mechanism. Residue His143 is the Proton acceptor; for ring-opening step of the active site. Residue Glu148 is the For ring-opening step of the active site.

It belongs to the glucosamine/galactosamine-6-phosphate isomerase family. NagB subfamily. Homohexamer.

The enzyme catalyses alpha-D-glucosamine 6-phosphate + H2O = beta-D-fructose 6-phosphate + NH4(+). It functions in the pathway amino-sugar metabolism; N-acetylneuraminate degradation; D-fructose 6-phosphate from N-acetylneuraminate: step 5/5. Its activity is regulated as follows. Allosterically activated by N-acetylglucosamine 6-phosphate (GlcNAc6P). Its function is as follows. Catalyzes the reversible isomerization-deamination of glucosamine 6-phosphate (GlcN6P) to form fructose 6-phosphate (Fru6P) and ammonium ion. This Edwardsiella ictaluri (strain 93-146) protein is Glucosamine-6-phosphate deaminase.